The following is a 445-amino-acid chain: Phosphoglucosamine mutase (445 aa).

S102 serves as the catalytic Phosphoserine intermediate. S102, D240, D242, and D244 together coordinate Mg(2+). S102 is subject to Phosphoserine.

The protein belongs to the phosphohexose mutase family. Mg(2+) is required as a cofactor. Post-translationally, activated by phosphorylation.

It catalyses the reaction alpha-D-glucosamine 1-phosphate = D-glucosamine 6-phosphate. Its function is as follows. Catalyzes the conversion of glucosamine-6-phosphate to glucosamine-1-phosphate. The protein is Phosphoglucosamine mutase of Mycobacterium ulcerans (strain Agy99).